The primary structure comprises 547 residues: Probable hydroxyacid-oxoacid transhydrogenase, mitochondrial (547 aa).

Belongs to the iron-containing alcohol dehydrogenase family. Hydroxyacid-oxoacid transhydrogenase subfamily.

Its subcellular location is the mitochondrion. The catalysed reaction is (S)-3-hydroxybutanoate + 2-oxoglutarate = (R)-2-hydroxyglutarate + acetoacetate. It catalyses the reaction 4-hydroxybutanoate + 2-oxoglutarate = (R)-2-hydroxyglutarate + succinate semialdehyde. Functionally, catalyzes the cofactor-independent reversible oxidation of gamma-hydroxybutyrate (GHB) to succinic semialdehyde (SSA) coupled to reduction of 2-ketoglutarate (2-KG) to D-2-hydroxyglutarate (D-2-HG). L-3-hydroxybutyrate (L-3-OHB) is also a substrate for HOT when using 2-KG as hydrogen acceptor, resulting in the formation of D-2-HG. This is Probable hydroxyacid-oxoacid transhydrogenase, mitochondrial (adhfe1) from Dictyostelium discoideum (Social amoeba).